Reading from the N-terminus, the 247-residue chain is MIKLVLLRHGESQWNLDNRFTGWHDIDLTDKGRREASNAGKLLCEAGFEFDVAYVSVLKRAIRTLWNVLDEMNLMWIPVIRNWRLNERHYGALQGLNKAETAQKYGDEQVLVWRRSYDTPPPPLERTDERWPGSDRRYAALDADEVPLTECLKDTVARFLPFWHETIAPEISKGRNVLIVAHGNSLRALVKYLDGISEEDIVGLNIPTGIPLVYELDDNLKPLKSYYLGDQEELKKAVDAVAGQGKA.

Residues 8–15 (RHGESQWN), 21–22 (TG), arginine 60, 87–90 (ERHY), lysine 98, 114–115 (RR), and 183–184 (GN) each bind substrate. The active-site Tele-phosphohistidine intermediate is histidine 9. Catalysis depends on glutamate 87, which acts as the Proton donor/acceptor.

This sequence belongs to the phosphoglycerate mutase family. BPG-dependent PGAM subfamily.

The enzyme catalyses (2R)-2-phosphoglycerate = (2R)-3-phosphoglycerate. It participates in carbohydrate degradation; glycolysis; pyruvate from D-glyceraldehyde 3-phosphate: step 3/5. Catalyzes the interconversion of 2-phosphoglycerate and 3-phosphoglycerate. This Chlorobium phaeovibrioides (strain DSM 265 / 1930) (Prosthecochloris vibrioformis (strain DSM 265)) protein is 2,3-bisphosphoglycerate-dependent phosphoglycerate mutase.